The chain runs to 405 residues: Acetate kinase (405 aa).

Asparagine 10 contributes to the Mg(2+) binding site. An ATP-binding site is contributed by lysine 17. Arginine 93 is a substrate binding site. The active-site Proton donor/acceptor is aspartate 150. Residues 210 to 214 (HLGNG), 284 to 286 (DMR), and 332 to 336 (GVGEN) contribute to the ATP site. Residue glutamate 386 coordinates Mg(2+).

Belongs to the acetokinase family. Homodimer. Mg(2+) is required as a cofactor. Requires Mn(2+) as cofactor.

It localises to the cytoplasm. It catalyses the reaction acetate + ATP = acetyl phosphate + ADP. It functions in the pathway metabolic intermediate biosynthesis; acetyl-CoA biosynthesis; acetyl-CoA from acetate: step 1/2. Functionally, catalyzes the formation of acetyl phosphate from acetate and ATP. Can also catalyze the reverse reaction. The protein is Acetate kinase of Streptomyces avermitilis (strain ATCC 31267 / DSM 46492 / JCM 5070 / NBRC 14893 / NCIMB 12804 / NRRL 8165 / MA-4680).